Reading from the N-terminus, the 99-residue chain is uncharacterized protein (99 aa).

The signal sequence occupies residues 1–17 (MMMNAFFPAMALIVLVG). Cys-18 carries N-palmitoyl cysteine lipidation. Residue Cys-18 is the site of S-diacylglycerol cysteine attachment.

Its subcellular location is the cell membrane. This is an uncharacterized protein from Escherichia coli O6:H1 (strain CFT073 / ATCC 700928 / UPEC).